A 263-amino-acid polypeptide reads, in one-letter code: Nicotinamide riboside transporter PnuC (263 aa).

Topologically, residues 1-40 (MQYGMDSFGLRGIPHQVFIKKKEGKIMSLAWWKRELFGGW) are cytoplasmic. The helical transmembrane segment at 41 to 61 (THFEAVWLLMFLGIQAVVFVF) threads the bilayer. Residue asparagine 62 is a topological domain, periplasmic. A helical transmembrane segment spans residues 63–83 (PDSWLASVAAVTGILCVVFVG). Residues 84–86 (KGK) are Cytoplasmic-facing. The helical transmembrane segment at 87-107 (ISNYLFGLISVSLYAYVSYTF) threads the bilayer. Residues 108 to 109 (KL) are Periplasmic-facing. A helical transmembrane segment spans residues 110-131 (YGEMMLNLLVYVPVQFVGFAMW). Glutamine 124 lines the beta-nicotinamide D-riboside pocket. Residues 132–155 (RKHMALGETAETEEVKAKALTVRQ) are Cytoplasmic-facing. Residues 156 to 177 (WLLVVAASVVGTSVYIEWLHHL) traverse the membrane as a helical segment. The Periplasmic segment spans residues 178-180 (GSA). The helical transmembrane segment at 181–201 (LPTLDGVTVVVSIVAQVLMIL) threads the bilayer. Position 196 (glutamine 196) interacts with beta-nicotinamide D-riboside. Topologically, residues 202-205 (RYRE) are cytoplasmic. A helical membrane pass occupies residues 206–226 (QWALWIVVNILTISLWAVAWF). Positions 210 and 214 each coordinate beta-nicotinamide D-riboside. At 227 to 232 (KNGETS) the chain is on the periplasmic side. The chain crosses the membrane as a helical span at residues 233–253 (LPLLLMYVMYLCNSVYGYINW). Residue tyrosine 242 participates in beta-nicotinamide D-riboside binding. Residues 254–263 (TKLVKRHSGQ) are Cytoplasmic-facing.

The protein belongs to the nicotinamide ribonucleoside (NR) uptake permease (TC 4.B.1) family. Homotrimer.

The protein localises to the cell inner membrane. Its function is as follows. Required for nicotinamide riboside transport across the inner membrane. This chain is Nicotinamide riboside transporter PnuC, found in Neisseria mucosa (strain ATCC 25996 / DSM 4631 / NCTC 10774 / M26).